We begin with the raw amino-acid sequence, 107 residues long: UPF0473 protein LACR_0139 (107 aa).

This sequence belongs to the UPF0473 family.

In Lactococcus lactis subsp. cremoris (strain SK11), this protein is UPF0473 protein LACR_0139.